Reading from the N-terminus, the 592-residue chain is Potassium-transporting ATPase potassium-binding subunit (592 aa).

A run of 11 helical transmembrane segments spans residues 7-27 (LQTV…GTFM), 71-91 (VLFN…QHLL), 136-156 (GLTV…IAVI), 179-199 (LYIL…QGVI), 287-307 (LEIL…GAMV), 314-334 (WTLL…LQGV), 411-431 (GLYT…LMIG), 449-469 (SVVT…IAMI), 473-493 (AVAA…YAFA), 515-535 (ILGA…VLAM), and 559-579 (FALW…FPAL).

It belongs to the KdpA family. The system is composed of three essential subunits: KdpA, KdpB and KdpC.

It is found in the cell inner membrane. In terms of biological role, part of the high-affinity ATP-driven potassium transport (or Kdp) system, which catalyzes the hydrolysis of ATP coupled with the electrogenic transport of potassium into the cytoplasm. This subunit binds the periplasmic potassium ions and delivers the ions to the membrane domain of KdpB through an intramembrane tunnel. The protein is Potassium-transporting ATPase potassium-binding subunit of Geobacter sulfurreducens (strain ATCC 51573 / DSM 12127 / PCA).